Here is a 1762-residue protein sequence, read N- to C-terminus: Kinase D-interacting substrate of 220 kDa (1762 aa).

The Cytoplasmic portion of the chain corresponds to 1-508 (MSVLISQSVI…WLIVFLTLLL (508 aa)). ANK repeat units lie at residues 45–74 (AAEQ…NWTA), 78–107 (ASKE…GWTA), 111–140 (ACYK…SVYP), 145–174 (AGRG…TTPL), 178–207 (ARKG…MTAL), 211–240 (VKGG…NTAL), 244–273 (SKEG…DTVL), 277–306 (VRGG…KTAL), 310–339 (VEKG…ETPL), 343–372 (TKMR…DTPL), and 376–405 (IRGR…KAGE). Residues 440-953 (YDLYSSALAD…NIVSVTGRLL (514 aa)) form the KAP NTPase domain. Residues 509-529 (CGGLGLVFAFTVDTNLAIAIS) traverse the membrane as a helical segment. The Extracellular segment spans residues 530 to 533 (LSFL). The chain crosses the membrane as a helical span at residues 534 to 554 (ALIYIFFIVIYFGGRREGESW). Over 555 to 668 (NWAWALSTRL…SFVIFLFIVG (114 aa)) the chain is Cytoplasmic. The chain crosses the membrane as a helical span at residues 669–689 (CIIAGITLLAIFRVDPKHLTV). Over 690-696 (NAILISI) the chain is Extracellular. The helical transmembrane segment at 697 to 717 (ASVVGLAFVLNCRTWWQVLDS) threads the bilayer. Residues 718–1680 (LLNSQRKRLH…TPSTVTLNNN (963 aa)) lie on the Cytoplasmic side of the membrane. Residues Ser-882 and Ser-885 each carry the phosphoserine modification. Residue Thr-914 is modified to Phosphothreonine. At Ser-918 the chain carries Phosphoserine; by PKD. The segment at 1089–1092 (PRPP) is mediates interaction with CRKL. Residues Ser-1163, Ser-1288, Ser-1344, Ser-1351, Ser-1353, Ser-1354, and Ser-1357 each carry the phosphoserine modification. Disordered regions lie at residues 1279–1305 (DPRF…HTEL), 1336–1358 (RHSN…LNSQ), 1390–1440 (EGGT…DGRK), and 1452–1556 (YSSS…EPIR). Polar residues predominate over residues 1338–1350 (SNLSWQSQTRRTP). Positions 1395 to 1422 (SSTISGRSSPHSTYYIGQSSSGGSIHST) are enriched in low complexity. The span at 1423 to 1440 (LEQERGKEGELKQEDGRK) shows a compositional bias: basic and acidic residues. Positions 1452–1462 (YSSSGVSTNEA) are enriched in polar residues. 4 positions are modified to phosphoserine: Ser-1513, Ser-1518, Ser-1547, and Ser-1566. The span at 1514-1524 (DEDESGTEESD) shows a compositional bias: acidic residues. Positions 1529–1553 (LKDDKDKKAEGKAERVCKSPEHSAE) are enriched in basic and acidic residues. Residues 1571–1628 (DKKDSSDSGVRSNESSPNHSLHNEAADDSQLEKANLIELEDEGHSGKRGMPHSLSGLQ) are disordered. Over residues 1579–1590 (GVRSNESSPNHS) the composition is skewed to polar residues. A phosphoserine mark is found at Ser-1615 and Ser-1625. Thr-1671 carries the phosphothreonine modification. Ser-1673 is subject to Phosphoserine. Thr-1676 is modified (phosphothreonine). The disordered stretch occupies residues 1704-1762 (ILRPGPSPNPTAVQNENLKSMAHKRSQRSSYTRLSKDASELHAASSESTGFGEERESIL). The short motif at 1757–1762 (ERESIL) is the PDZ-binding element.

As to quaternary structure, found in a complex, at least composed of KIDINS220, MAGI2, NTRK1 and RAPGEF2; the complex is mainly formed at late endosomes in a nerve growth factor (NGF)-dependent manner. Interacts with RAPGEF2; the interaction is strengthened after NGF stimulation. Isoform 2 interacts (via C-terminal domain) with MAGI2 isoform 1 (via PDZ domain). Interacts with NTRK1, NTRK2, NTRK3, ERKL and NGFR. Can form a ternary complex with NGFR and NTRK1 and this complex is affected by the expression levels of KIDINS220/ARMS. An increase in KIDINS220/ARMS expression leads to a decreased association of NGFR and NTRK1. Interacts (via PDZ-binding motif) with SNTA1 and SNTB2 (via PDZ domains). Interacts with EPHA4 and PRKD1. In terms of processing, tyrosine phosphorylated by NTRK1, NTRK2, EPHB2 and EPHA4. Phosphorylation at Ser-918 is induced by phorbol ester treatment. Phosphorylation by NTRK2 is induced by brain-derived neurotrophic factor (BDNF) and neurotrophin-4/5. Phosphorylation by NTRK1 is induced by nerve growth factor (NGF). As to expression, expressed in developing nervous system and in highly plastic areas of the adult brain. Also expressed in neuroendocrine cells, where it concentrates at the tip of neurites. Expressed in developing muscle and is concentrated at the neuromuscular junction (NMS). SNTA1 can regulate its localization in the NMS.

The protein resides in the membrane. Its subcellular location is the late endosome. In terms of biological role, promotes a prolonged MAP-kinase signaling by neurotrophins through activation of a Rap1-dependent mechanism. Provides a docking site for the CRKL-C3G complex, resulting in Rap1-dependent sustained ERK activation. May play an important role in regulating postsynaptic signal transduction through the syntrophin-mediated localization of receptor tyrosine kinases such as EPHA4. In cooperation with SNTA1 can enhance EPHA4-induced JAK/STAT activation. Plays a role in nerve growth factor (NGF)-induced recruitment of RAPGEF2 to late endosomes and neurite outgrowth. May play a role in neurotrophin- and ephrin-mediated neuronal outgrowth and in axon guidance during neural development and in neuronal regeneration. This is Kinase D-interacting substrate of 220 kDa (Kidins220) from Rattus norvegicus (Rat).